Here is a 199-residue protein sequence, read N- to C-terminus: Recombination protein RecR (199 aa).

A C4-type zinc finger spans residues cysteine 58–cysteine 73. One can recognise a Toprim domain in the interval glycine 81 to proline 176.

It belongs to the RecR family.

May play a role in DNA repair. It seems to be involved in an RecBC-independent recombinational process of DNA repair. It may act with RecF and RecO. The sequence is that of Recombination protein RecR from Jannaschia sp. (strain CCS1).